A 310-amino-acid polypeptide reads, in one-letter code: Haloalkane dehalogenase (310 aa).

Residues 49 to 295 enclose the AB hydrolase-1 domain; it reads VFLCLHGEPT…DAGHFVQEFG (247 aa). The active-site Nucleophile is the aspartate 124. Tryptophan 125 and tryptophan 175 together coordinate chloride. Aspartate 260 functions as the Proton donor in the catalytic mechanism. Histidine 289 functions as the Proton acceptor in the catalytic mechanism.

Belongs to the haloalkane dehalogenase family. Type 1 subfamily. In terms of assembly, monomer.

It carries out the reaction 1-haloalkane + H2O = a halide anion + a primary alcohol + H(+). The catalysed reaction is 1,2-dichloroethane + H2O = 2-chloroethanol + chloride + H(+). Its pathway is xenobiotic degradation; 1,2-dichloroethane degradation; glycolate from 1,2-dichloroethane: step 1/4. With respect to regulation, inhibited by thiol reagents such as p-chloromercuribenzoate and iodoacetamide. Its function is as follows. Catalyzes hydrolytic cleavage of carbon-halogen bonds in halogenated aliphatic compounds, leading to the formation of the corresponding primary alcohols, halide ions and protons. Has a broad substrate specificity, which includes terminally mono- and di- chlorinated and brominated alkanes (up to C4 only). The highest activity was found with 1,2-dichloroethane, 1,3-dichloropropane, and 1,2-dibromoethane. This chain is Haloalkane dehalogenase (dhlA), found in Xanthobacter autotrophicus.